The primary structure comprises 169 residues: Disulfide bond formation protein B (169 aa).

The Cytoplasmic segment spans residues 1 to 14; that stretch reads MNNLTLSLRRERRL. The helical transmembrane segment at 15 to 31 threads the bilayer; sequence LVLLALVCLALLAGALY. Residues 32 to 49 lie on the Periplasmic side of the membrane; the sequence is LQYVKNEDPCPLCIIQRY. A disulfide bond links Cys41 and Cys44. The chain crosses the membrane as a helical span at residues 50 to 64; the sequence is FFVLIAVFAFIGAGM. Over 65–71 the chain is Cytoplasmic; that stretch reads ASGAGVA. Residues 72 to 89 form a helical membrane-spanning segment; it reads VTEALIVLSAAAGVGTAA. Residues 90 to 144 lie on the Periplasmic side of the membrane; sequence RHLYVQLNPGFSCGFDALQPVVDSLPPARWLPGVFKVAGLCETVYPPIFGILLPG. Cys102 and Cys130 are disulfide-bonded. Residues 145–163 traverse the membrane as a helical segment; that stretch reads WALIAFVLIAVPVAVSLLR. Topologically, residues 164–169 are cytoplasmic; that stretch reads HRGRLR.

The protein belongs to the DsbB family.

It localises to the cell inner membrane. In terms of biological role, required for disulfide bond formation in some periplasmic proteins. Acts by oxidizing the DsbA protein. The sequence is that of Disulfide bond formation protein B from Burkholderia mallei (strain ATCC 23344).